A 341-amino-acid chain; its full sequence is MDGLLTPRESAKFIAENSRDVFIDDGGVRRVAELLLAKATGPELRIEGWKAIHELNPRGTDEAAVNWVFVTDTLNFSFWSESDEYKCQVGFGGKTYSGYWSLCAAVNRALDEGIPITSASYYATVTLDEVRHILRSDTDVPMPLIEERHRILNETGKILLEKFGGSFLNCVQKSDKSAQKLLHLVVENFPSYRDVTQFEGKRISFYKRAQILVADTWSVLEGKGDGCFKDISSITMFADYRLPQVLVYLGALKYSNELLEKLLKGEMLFYGNRQEVEIRGCSVWCVELIRDCLLELIEKKGEKTTGEINSILLDYYLWDYARDHREDMKGIPFHHTRCIYY.

M1 is modified (N-acetylmethionine). 6 residues coordinate queuine: H53, F237, D239, D314, Y315, and D319. Residue D239 is the Nucleophile or transition state stabilizer of the active site.

The protein belongs to the QNG1 protein family.

The enzyme catalyses queuosine 5'-phosphate + H2O = queuine + D-ribose 5-phosphate. In terms of biological role, catalyzes the hydrolysis of queuosine 5'-phosphate, releasing the nucleobase queuine (q). Is required for salvage of queuine from exogenous queuosine (Q) that is imported and then converted to queuosine 5'-phosphate intracellularly. The sequence is that of Queuosine 5'-phosphate N-glycosylase/hydrolase from Bos taurus (Bovine).